A 779-amino-acid chain; its full sequence is Acyl-CoA dehydrogenase family member 11 (779 aa).

N6-acetyllysine is present on residues K163, K166, and K175. S210 carries the phosphoserine modification. Y323 carries the post-translational modification Phosphotyrosine. Residues K368 and K390 each carry the N6-succinyllysine modification. Residues 503–513 (FCMTEPNVSSS), 511–513 (SSS), 537–539 (WSS), and S539 contribute to the FAD site. Substrate is bound at residue S513. Position 628 to 631 (628 to 631 (GPGR)) interacts with substrate. Residues R656, Q726, and 726–730 (QVHGG) each bind FAD. G754 is a substrate binding site. FAD is bound by residues 755–757 (PDE) and E757. Residue K765 is modified to N6-acetyllysine.

It belongs to the acyl-CoA dehydrogenase family. As to quaternary structure, homodimer. FAD serves as cofactor.

It localises to the peroxisome. It is found in the mitochondrion membrane. The enzyme catalyses a 2,3-saturated acyl-CoA + oxidized [electron-transfer flavoprotein] + H(+) = a (2E)-enoyl-CoA + reduced [electron-transfer flavoprotein]. It carries out the reaction docosanoyl-CoA + oxidized [electron-transfer flavoprotein] + H(+) = (2E)-docosenoyl-CoA + reduced [electron-transfer flavoprotein]. The catalysed reaction is tetracosanoyl-CoA + oxidized [electron-transfer flavoprotein] + H(+) = (2E)-tetracosenoyl-CoA + reduced [electron-transfer flavoprotein]. It catalyses the reaction eicosanoyl-CoA + oxidized [electron-transfer flavoprotein] + H(+) = (2E)-eicosenoyl-CoA + reduced [electron-transfer flavoprotein]. The enzyme catalyses hexacosanoyl-CoA + oxidized [electron-transfer flavoprotein] + H(+) = (2E)-hexacosenoyl-CoA + reduced [electron-transfer flavoprotein]. It carries out the reaction tricosanoyl-CoA + oxidized [electron-transfer flavoprotein] + H(+) = (2E)-tricosenoyl-CoA + reduced [electron-transfer flavoprotein]. The protein operates within lipid metabolism; fatty acid beta-oxidation. Acyl-CoA dehydrogenase, that exhibits maximal activity towards saturated C22-CoA. Probably participates in beta-oxydation and energy production but could also play a role in the metabolism of specific fatty acids to control fatty acids composition of cellular lipids in brain. This Mus musculus (Mouse) protein is Acyl-CoA dehydrogenase family member 11 (Acad11).